Reading from the N-terminus, the 221-residue chain is Uracil-DNA glycosylase (221 aa).

Catalysis depends on D65, which acts as the Proton acceptor.

This sequence belongs to the uracil-DNA glycosylase (UDG) superfamily. UNG family.

It localises to the cytoplasm. The enzyme catalyses Hydrolyzes single-stranded DNA or mismatched double-stranded DNA and polynucleotides, releasing free uracil.. Its function is as follows. Excises uracil residues from the DNA which can arise as a result of misincorporation of dUMP residues by DNA polymerase or due to deamination of cytosine. The chain is Uracil-DNA glycosylase from Flavobacterium johnsoniae (strain ATCC 17061 / DSM 2064 / JCM 8514 / BCRC 14874 / CCUG 350202 / NBRC 14942 / NCIMB 11054 / UW101) (Cytophaga johnsonae).